The sequence spans 899 residues: Calcium-transporting ATPase 1 (899 aa).

A run of 4 helical transmembrane segments spans residues 59–79 (FVKD…VTLG), 80–100 (NIDD…VGFV), 247–267 (QLSL…FFQG), and 282–302 (VAAI…LGVL). Residue aspartate 329 is the 4-aspartylphosphate intermediate of the active site. Transmembrane regions (helical) follow at residues 688-708 (FQLS…VFGF), 757-777 (QLLQ…IVVF), 827-847 (FNIA…ASPF), and 854-874 (EAIG…VLWV). Serine 892 is modified (phosphoserine).

Belongs to the cation transport ATPase (P-type) (TC 3.A.3) family.

Its subcellular location is the endoplasmic reticulum membrane. It carries out the reaction Ca(2+)(in) + ATP + H2O = Ca(2+)(out) + ADP + phosphate + H(+). Its function is as follows. Transports calcium and manganese ions into the cell. Regulates cell morphogenesis through control of manganese and calcium homeostasis. The protein is Calcium-transporting ATPase 1 (pmr1) of Schizosaccharomyces pombe (strain 972 / ATCC 24843) (Fission yeast).